The chain runs to 501 residues: Solute carrier family 2, facilitated glucose transporter member 5 (501 aa).

At M1 the chain carries N-acetylmethionine. Residues 1–17 lie on the Cytoplasmic side of the membrane; the sequence is MEEKHQEETGELTLVLA. A helical transmembrane segment spans residues 18–38; sequence LATLIAAFGSSFQYGYNVAAV. Y31 is a D-fructose binding site. Residues 39-67 lie on the Extracellular side of the membrane; the sequence is NSPSEFMQQFYNDTYYDRNEENIESFTLT. The N-linked (GlcNAc...) asparagine glycan is linked to N50. A helical membrane pass occupies residues 68–90; sequence LLWSLTVSMFPFGGFIGSLMVGT. Topologically, residues 91-97 are cytoplasmic; sequence LVNKLGR. Residues 98-118 traverse the membrane as a helical segment; the sequence is KGALLFNNIFSILPAILMGCS. Topologically, residues 119–125 are extracellular; the sequence is QIAQSFE. A helical transmembrane segment spans residues 126–148; that stretch reads LIIISRLLVGICAGISSNVVPMY. Residues 149–160 are Cytoplasmic-facing; that stretch reads LGELAPKNLRGA. The helical transmembrane segment at 161–181 threads the bilayer; it reads LGVVPQLFITVGILVAQLFGL. Q166 is a D-fructose binding site. Topologically, residues 182-191 are extracellular; that stretch reads RSLLANEDGW. The chain crosses the membrane as a helical span at residues 192–212; sequence PVLLGLTGVPAGLQLLLLPFF. Residues 213-276 lie on the Cytoplasmic side of the membrane; the sequence is PESPRYLLIQ…LFTMQSLRWQ (64 aa). A helical transmembrane segment spans residues 277–297; it reads LISMIVLMAGQQLSGVNAIYY. Residues Q287 and 295 to 297 each bind D-fructose; that span reads IYY. Topologically, residues 298–312 are extracellular; that stretch reads YADQIYLSAGVKSDD. The chain crosses the membrane as a helical span at residues 313–333; sequence VQYVTAGTGAVNVFMTILTIF. The Cytoplasmic portion of the chain corresponds to 334-341; it reads VVELWGRR. Residues 342–362 traverse the membrane as a helical segment; that stretch reads FLLLVGFSTCLIACLVLTAAL. The Extracellular segment spans residues 363–370; sequence ALQNTISW. Residues 371–393 form a helical membrane-spanning segment; it reads MPYISIVCVIVYVIGHALGPSPI. H386 is a binding site for D-fructose. The Cytoplasmic portion of the chain corresponds to 394-411; sequence PALLITEIFLQSSRPAAY. A helical membrane pass occupies residues 412–432; it reads MIGGSVHWLSNFTVGLIFPFI. 418–419 contacts D-fructose; the sequence is HW. Topologically, residues 433–438 are extracellular; sequence QMGLGP. Residues 439–459 traverse the membrane as a helical segment; the sequence is YSFIIFATICFLTTIYIFMVV. The Cytoplasmic segment spans residues 460 to 501; it reads PETKGRTFIEINQIFTMKNKVSDVYPKKEEELGALPHAILEQ.

It belongs to the major facilitator superfamily. Sugar transporter (TC 2.A.1.1) family. Glucose transporter subfamily. As to expression, detected at the apical membrane of villi in the jejunum. Detected in jejunum mucosa. Detected in epididymis and whole testis (at protein level). Detected in small intestine, kidney and testis. Detected in cochlea, but not in inner or outer cochlear hair cells.

The protein localises to the apical cell membrane. It is found in the cell membrane. Its subcellular location is the sarcolemma. The catalysed reaction is D-fructose(out) = D-fructose(in). With respect to regulation, fructose uptake is inhibited by cytochalasin B. Its function is as follows. Functions as a fructose transporter that has only low activity with other monosaccharides. Can mediate the uptake of deoxyglucose, but with low efficiency. Essential for fructose uptake in the small intestine. Plays a role in the regulation of salt uptake and blood pressure in response to dietary fructose. Required for the development of high blood pressure in response to high dietary fructose intake. This Mus musculus (Mouse) protein is Solute carrier family 2, facilitated glucose transporter member 5.